Here is a 152-residue protein sequence, read N- to C-terminus: Small ribosomal subunit protein uS13z/uS13y/uS13x (152 aa).

S2 is modified (N-acetylserine).

This sequence belongs to the universal ribosomal protein uS13 family.

It is found in the cytoplasm. In terms of biological role, located at the top of the head of the 40S subunit, it contacts several helices of the 18S rRNA. This is Small ribosomal subunit protein uS13z/uS13y/uS13x (RPS18A) from Arabidopsis thaliana (Mouse-ear cress).